A 113-amino-acid polypeptide reads, in one-letter code: Translation initiation factor 1A (113 aa).

Positions 12-87 (EVIRVPLPEG…KRGDIVYRYT (76 aa)) constitute an S1-like domain.

Belongs to the eIF-1A family.

Functionally, seems to be required for maximal rate of protein biosynthesis. Enhances ribosome dissociation into subunits and stabilizes the binding of the initiator Met-tRNA(I) to 40 S ribosomal subunits. The sequence is that of Translation initiation factor 1A (eIF1A) from Pyrococcus abyssi (strain GE5 / Orsay).